We begin with the raw amino-acid sequence, 445 residues long: Methionine aminopeptidase 2 (445 aa).

The interval 1–80 (MAAQVASGVG…TSKVQTEPPR (80 aa)) is disordered. Residues 57-71 (AKKKKKKTKKKKKGT) are compositionally biased toward basic residues. His-195 lines the substrate pocket. The a divalent metal cation site is built by Asp-215, Asp-226, and His-295. Substrate is bound at residue His-303. Positions 331 and 426 each coordinate a divalent metal cation.

This sequence belongs to the peptidase M24A family. Methionine aminopeptidase eukaryotic type 2 subfamily. Co(2+) serves as cofactor. Zn(2+) is required as a cofactor. Requires Mn(2+) as cofactor. It depends on Fe(2+) as a cofactor.

Its subcellular location is the cytoplasm. The catalysed reaction is Release of N-terminal amino acids, preferentially methionine, from peptides and arylamides.. Its function is as follows. Cotranslationally removes the N-terminal methionine from nascent proteins. The N-terminal methionine is often cleaved when the second residue in the primary sequence is small and uncharged (Met-Ala-, Cys, Gly, Pro, Ser, Thr, or Val). This chain is Methionine aminopeptidase 2, found in Paracoccidioides brasiliensis (strain Pb03).